Reading from the N-terminus, the 405-residue chain is Deoxyguanosinetriphosphate triphosphohydrolase-like protein (405 aa).

Positions 75-219 (RLTHTIEVAQ…AAIADDIAYN (145 aa)) constitute an HD domain.

It belongs to the dGTPase family. Type 2 subfamily.

This Rhizobium etli (strain ATCC 51251 / DSM 11541 / JCM 21823 / NBRC 15573 / CFN 42) protein is Deoxyguanosinetriphosphate triphosphohydrolase-like protein.